A 255-amino-acid chain; its full sequence is Ribosome maturation factor RimP (255 aa).

Residues Leu-177–His-255 are disordered. Acidic residues predominate over residues Asp-186–Val-202. Basic and acidic residues predominate over residues Pro-216–Val-230.

The protein belongs to the RimP family.

It localises to the cytoplasm. Required for maturation of 30S ribosomal subunits. This is Ribosome maturation factor RimP from Methylorubrum populi (strain ATCC BAA-705 / NCIMB 13946 / BJ001) (Methylobacterium populi).